The chain runs to 89 residues: Small ribosomal subunit protein uS14 (89 aa).

Belongs to the universal ribosomal protein uS14 family. As to quaternary structure, part of the 30S ribosomal subunit. Contacts proteins S3 and S10.

In terms of biological role, binds 16S rRNA, required for the assembly of 30S particles and may also be responsible for determining the conformation of the 16S rRNA at the A site. This Onion yellows phytoplasma (strain OY-M) protein is Small ribosomal subunit protein uS14.